Consider the following 156-residue polypeptide: MPRRRVAAKRDVLDDPKYGSQILAKFMNHVMESGKKAVAERIVYGALEKVKERKNSDPLEIFEKALDAIAPLVEVKSRRVGGATYQVPVEVRPSRRNALAMRWLVDFARKRGEKSMALRLAGELMDAAEGKGAAVKKREDVHRMAEANKAFSHYRF.

The protein belongs to the universal ribosomal protein uS7 family. In terms of assembly, part of the 30S ribosomal subunit. Contacts proteins S9 and S11.

One of the primary rRNA binding proteins, it binds directly to 16S rRNA where it nucleates assembly of the head domain of the 30S subunit. Is located at the subunit interface close to the decoding center, probably blocks exit of the E-site tRNA. The protein is Small ribosomal subunit protein uS7 of Pseudomonas syringae pv. syringae (strain B728a).